A 371-amino-acid chain; its full sequence is uncharacterized protein (371 aa).

Residues 287–323 are a coiled coil; the sequence is EVVTALDRYRQHLRETRERLEEKQGKLLEELKGYESM.

This is an uncharacterized protein from Aspergillus fumigatus (strain ATCC MYA-4609 / CBS 101355 / FGSC A1100 / Af293) (Neosartorya fumigata).